An 844-amino-acid polypeptide reads, in one-letter code: Putative ubiquitin thioesterase 232R (844 aa).

4 disordered regions span residues 136-223 (NSST…DEAE), 261-287 (SRRK…PPME), 326-377 (LLNG…PELT), and 422-541 (QKKQ…KLSV). The segment covering 137-216 (SSTRSRSPSV…PSRQSVRQSS (80 aa)) has biased composition (low complexity). Composition is skewed to low complexity over residues 332–341 (RPSPSLPQSR) and 354–364 (RSPSVGSPSVR). A compositionally biased stretch (pro residues) spans 429–438 (SPSPTPPSPV). The span at 472 to 485 (VQKKMGKSGEREPK) shows a compositional bias: basic and acidic residues. The span at 504 to 518 (SLRSRLSTQQQTQQS) shows a compositional bias: low complexity. Residues 526-535 (ESIKPEESVR) are compositionally biased toward basic and acidic residues. One can recognise an OTU domain in the interval 590 to 725 (YTVKQVSGDG…NYHYTSLVPI (136 aa)). Asp-598 is a catalytic residue. The Nucleophile role is filled by Cys-601. His-718 is an active-site residue.

The catalysed reaction is Thiol-dependent hydrolysis of ester, thioester, amide, peptide and isopeptide bonds formed by the C-terminal Gly of ubiquitin (a 76-residue protein attached to proteins as an intracellular targeting signal).. Its function is as follows. Hydrolase that can remove conjugated ubiquitin from proteins and may therefore play an important regulatory role at the level of protein turnover by preventing degradation. The chain is Putative ubiquitin thioesterase 232R from Aedes vexans (Inland floodwater mosquito).